We begin with the raw amino-acid sequence, 181 residues long: Capsid protein VP4 (181 aa).

Its subcellular location is the virion. Its function is as follows. VP4 self-assembles to form, together with capsid protein VP10, an icosahedral caspid of 87 nm in diameter, with a T=43 symmetry and composed of 420 hexamers and 12 pentamers. VP4 proteins arrange into hexons, while VP10 proteins form the pentameric densities located at the 5-fold axes in the virion. The stoichiometry of VP4:VP10 is 42:1. This Sulfolobus (SPV1) protein is Capsid protein VP4.